We begin with the raw amino-acid sequence, 482 residues long: UDP-N-acetylmuramate--L-alanine ligase (482 aa).

ATP is bound at residue 129 to 135; the sequence is GTHGKTT.

It belongs to the MurCDEF family.

It localises to the cytoplasm. It carries out the reaction UDP-N-acetyl-alpha-D-muramate + L-alanine + ATP = UDP-N-acetyl-alpha-D-muramoyl-L-alanine + ADP + phosphate + H(+). It functions in the pathway cell wall biogenesis; peptidoglycan biosynthesis. Cell wall formation. The chain is UDP-N-acetylmuramate--L-alanine ligase from Acinetobacter baumannii (strain SDF).